The primary structure comprises 1088 residues: RNA-directed RNA polymerase (1088 aa).

The RdRp catalytic domain maps to Leu-501–Ile-687.

It belongs to the reoviridae RNA-directed RNA polymerase family. In terms of assembly, interacts with VP3 (Potential). Interacts with VP2; this interaction activates VP1. Interacts with NSP5; this interaction is probably necessary for the formation of functional virus factories. Interacts with NSP2; this interaction is weak. Mg(2+) is required as a cofactor.

Its subcellular location is the virion. The enzyme catalyses RNA(n) + a ribonucleoside 5'-triphosphate = RNA(n+1) + diphosphate. RNA-directed RNA polymerase that is involved in both transcription and genome replication. Together with VP3 capping enzyme, forms an enzyme complex positioned near the channels situated at each of the five-fold vertices of the core. Following infection, the outermost layer of the virus is lost, leaving a double-layered particle (DLP) made up of the core and VP6 shell. VP1 then catalyzes the transcription of fully conservative plus-strand genomic RNAs that are extruded through the DLP's channels into the cytoplasm where they function as mRNAs for translation of viral proteins. One copy of each of the viral (+)RNAs is also recruited during core assembly, together with newly synthesized polymerase complexes and VP2. The polymerase of these novo-formed particles catalyzes the synthesis of complementary minus-strands leading to dsRNA formation. To do so, the polymerase specifically recognizes and binds 4 bases 5'-UGUG-3' in the conserved 3'-sequence of plus-strand RNA templates. VP2 presumably activates the autoinhibited VP1-RNA complex to coordinate packaging and genome replication. Once dsRNA synthesis is complete, the polymerase switches to the transcriptional mode, thus providing secondary transcription. The polypeptide is RNA-directed RNA polymerase (Rotavirus A (strain RVA/Human/United States/Wa/1974/G1P1A[8]) (RV-A)).